The chain runs to 323 residues: Fructose-1,6-bisphosphatase class 1 (323 aa).

Positions 88, 107, 109, and 110 each coordinate Mg(2+). Substrate is bound by residues 110 to 113 and Asn-200; that span reads DGSS. Residue Glu-272 coordinates Mg(2+).

It belongs to the FBPase class 1 family. As to quaternary structure, homotetramer. Mg(2+) is required as a cofactor.

It localises to the cytoplasm. It carries out the reaction beta-D-fructose 1,6-bisphosphate + H2O = beta-D-fructose 6-phosphate + phosphate. It participates in carbohydrate biosynthesis; gluconeogenesis. The polypeptide is Fructose-1,6-bisphosphatase class 1 (Acinetobacter baumannii (strain AYE)).